The following is an 85-amino-acid chain: U4-theraphotoxin-Hhn1a (85 aa).

Positions 1 to 22 are cleaved as a signal peptide; it reads MKVTLIAILTCAAVLVLHTTAA. Positions 23-48 are excised as a propeptide; sequence EEFEAESQLMEVGMPDTELAAVDEER. Intrachain disulfides connect Cys-52/Cys-66, Cys-56/Cys-77, and Cys-71/Cys-82.

This sequence belongs to the neurotoxin 12 (Hwtx-2) family. 02 (Hwtx-2) subfamily. As to quaternary structure, monomer. As to expression, expressed by the venom gland.

The protein resides in the secreted. Its function is as follows. Neurotoxin active on both insects and mammals. The sequence is that of U4-theraphotoxin-Hhn1a from Cyriopagopus hainanus (Chinese bird spider).